The sequence spans 341 residues: Anthranilate phosphoribosyltransferase (341 aa).

5-phospho-alpha-D-ribose 1-diphosphate contacts are provided by residues Gly-84, 94–97 (NVST), 112–120 (KHGGRAASS), and Ser-124. Gly-84 contributes to the anthranilate binding site. Position 96 (Ser-96) interacts with Mg(2+). Arg-170 contacts anthranilate. Mg(2+) is bound by residues Asp-229 and Glu-230.

It belongs to the anthranilate phosphoribosyltransferase family. In terms of assembly, homodimer. Mg(2+) is required as a cofactor.

It carries out the reaction N-(5-phospho-beta-D-ribosyl)anthranilate + diphosphate = 5-phospho-alpha-D-ribose 1-diphosphate + anthranilate. The protein operates within amino-acid biosynthesis; L-tryptophan biosynthesis; L-tryptophan from chorismate: step 2/5. In terms of biological role, catalyzes the transfer of the phosphoribosyl group of 5-phosphorylribose-1-pyrophosphate (PRPP) to anthranilate to yield N-(5'-phosphoribosyl)-anthranilate (PRA). In Methylobacillus flagellatus (strain ATCC 51484 / DSM 6875 / VKM B-1610 / KT), this protein is Anthranilate phosphoribosyltransferase.